The following is a 330-amino-acid chain: MQFIDQARITVRGGRGGDGIAAFRREKYVPAGGPSGGDGGHGGPVVLEADSNLQTLLDFKYKRLFAADDGRRGGPNKCTGASGRDLVIKVPCGTEVRHLATGILLGDLTDPGERLTVAFGGRGGLGNAHYLSNRNRAPEKFTEGRDGEEWPLQLELKLLAEVGIIGLPNAGKSTLIAVLSAARPKIADYPFTTLVPNLGVVRRPSGDGTVFADIPGLIAGAAQGAGLGHDFLRHIERTRLLIHVVDAGADDPVGDLRVVEKELEAYGHGLVDRPRLLVLNKQELLLDEQLPELSNELEQVSGRAPLCISAAMGRNLDQLLERVWKELGIA.

The region spanning 1–159 (MQFIDQARIT…WPLQLELKLL (159 aa)) is the Obg domain. Residues 160–328 (AEVGIIGLPN…LLERVWKELG (169 aa)) enclose the OBG-type G domain. Residues 166–173 (GLPNAGKS), 191–195 (FTTLV), 213–216 (DIPG), 280–283 (NKQE), and 309–311 (SAA) contribute to the ATP site. The Mg(2+) site is built by Ser-173 and Thr-193.

The protein belongs to the TRAFAC class OBG-HflX-like GTPase superfamily. OBG GTPase family. Monomer. The cofactor is Mg(2+).

It is found in the cytoplasm. Functionally, an essential GTPase which binds GTP, GDP and possibly (p)ppGpp with moderate affinity, with high nucleotide exchange rates and a fairly low GTP hydrolysis rate. Plays a role in control of the cell cycle, stress response, ribosome biogenesis and in those bacteria that undergo differentiation, in morphogenesis control. The chain is GTPase Obg from Parasynechococcus marenigrum (strain WH8102).